The chain runs to 274 residues: 3-methyl-2-oxobutanoate hydroxymethyltransferase (274 aa).

D46 and D85 together coordinate Mg(2+). 3-methyl-2-oxobutanoate-binding positions include 46-47 (DS), D85, and K115. Position 117 (E117) interacts with Mg(2+). The active-site Proton acceptor is the E184.

Belongs to the PanB family. As to quaternary structure, homodecamer; pentamer of dimers. Requires Mg(2+) as cofactor.

Its subcellular location is the cytoplasm. It catalyses the reaction 3-methyl-2-oxobutanoate + (6R)-5,10-methylene-5,6,7,8-tetrahydrofolate + H2O = 2-dehydropantoate + (6S)-5,6,7,8-tetrahydrofolate. It functions in the pathway cofactor biosynthesis; (R)-pantothenate biosynthesis; (R)-pantoate from 3-methyl-2-oxobutanoate: step 1/2. Catalyzes the reversible reaction in which hydroxymethyl group from 5,10-methylenetetrahydrofolate is transferred onto alpha-ketoisovalerate to form ketopantoate. This is 3-methyl-2-oxobutanoate hydroxymethyltransferase from Thermoanaerobacter pseudethanolicus (strain ATCC 33223 / 39E) (Clostridium thermohydrosulfuricum).